We begin with the raw amino-acid sequence, 373 residues long: Phosphoserine aminotransferase (373 aa).

Position 46 (Arg-46) interacts with L-glutamate. 4 residues coordinate pyridoxal 5'-phosphate: Phe-104, Thr-150, Asp-172, and Gln-195. Position 196 is an N6-(pyridoxal phosphate)lysine (Lys-196). Pyridoxal 5'-phosphate is bound at residue 247–248 (NT).

This sequence belongs to the class-V pyridoxal-phosphate-dependent aminotransferase family. SerC subfamily. In terms of assembly, homodimer. It depends on pyridoxal 5'-phosphate as a cofactor.

It localises to the cytoplasm. The catalysed reaction is O-phospho-L-serine + 2-oxoglutarate = 3-phosphooxypyruvate + L-glutamate. It carries out the reaction 4-(phosphooxy)-L-threonine + 2-oxoglutarate = (R)-3-hydroxy-2-oxo-4-phosphooxybutanoate + L-glutamate. Its pathway is amino-acid biosynthesis; L-serine biosynthesis; L-serine from 3-phospho-D-glycerate: step 2/3. It functions in the pathway cofactor biosynthesis; pyridoxine 5'-phosphate biosynthesis; pyridoxine 5'-phosphate from D-erythrose 4-phosphate: step 3/5. In terms of biological role, catalyzes the reversible conversion of 3-phosphohydroxypyruvate to phosphoserine and of 3-hydroxy-2-oxo-4-phosphonooxybutanoate to phosphohydroxythreonine. The polypeptide is Phosphoserine aminotransferase (Rhodococcus opacus (strain B4)).